A 216-amino-acid chain; its full sequence is MOB kinase activator 3B (216 aa).

Positions 82, 87, 164, and 169 each coordinate Zn(2+).

Functionally, modulates LATS1 expression in the Hippo signaling pathway which plays a pivotal role in organ size control and tumor suppression by restricting proliferation and promoting apoptosis. The polypeptide is MOB kinase activator 3B (Mob3b) (Mus musculus (Mouse)).